A 451-amino-acid chain; its full sequence is Methylenetetrahydrofolate--tRNA-(uracil-5-)-methyltransferase TrmFO (451 aa).

9–14 (GGGMAG) contributes to the FAD binding site.

This sequence belongs to the MnmG family. TrmFO subfamily. It depends on FAD as a cofactor.

The protein localises to the cytoplasm. The catalysed reaction is uridine(54) in tRNA + (6R)-5,10-methylene-5,6,7,8-tetrahydrofolate + NADH + H(+) = 5-methyluridine(54) in tRNA + (6S)-5,6,7,8-tetrahydrofolate + NAD(+). It catalyses the reaction uridine(54) in tRNA + (6R)-5,10-methylene-5,6,7,8-tetrahydrofolate + NADPH + H(+) = 5-methyluridine(54) in tRNA + (6S)-5,6,7,8-tetrahydrofolate + NADP(+). In terms of biological role, catalyzes the folate-dependent formation of 5-methyl-uridine at position 54 (M-5-U54) in all tRNAs. This Dinoroseobacter shibae (strain DSM 16493 / NCIMB 14021 / DFL 12) protein is Methylenetetrahydrofolate--tRNA-(uracil-5-)-methyltransferase TrmFO.